The chain runs to 487 residues: Protein DETOXIFICATION 10 (487 aa).

A run of 12 helical transmembrane segments spans residues 35–55 (LICFAAPMAAVVIIQFMIQII), 73–93 (FAVSFCNVTGFSFIIGLSCAL), 122–142 (LVCLPLSLLWFNMGKLIVILG), 155–175 (AAWLIPGLFAYAVLQPLIRYF), 184–204 (LLVTSSVVFCIHVPLCWLLVY), 211–231 (IGGALALSLSYWLYAIFLGSF), 264–284 (AAMLCLEWWSYELIILLSGLL), 293–313 (VLSICFETLSITYSIPLAIAA), 333–353 (IVVYAAMSLAVMDALMVSMSL), 377–397 (MAPLVSISIILDSLQGVLSGV), 412–432 (FGAFYLWGIPIAASLAFWVHL), and 435–455 (VGLWIGILAGAVLQTLLLALV).

The protein belongs to the multi antimicrobial extrusion (MATE) (TC 2.A.66.1) family.

It is found in the membrane. The polypeptide is Protein DETOXIFICATION 10 (Arabidopsis thaliana (Mouse-ear cress)).